Reading from the N-terminus, the 111-residue chain is Ribonuclease P protein component (111 aa).

The protein belongs to the RnpA family. In terms of assembly, consists of a catalytic RNA component (M1 or rnpB) and a protein subunit.

It catalyses the reaction Endonucleolytic cleavage of RNA, removing 5'-extranucleotides from tRNA precursor.. Functionally, RNaseP catalyzes the removal of the 5'-leader sequence from pre-tRNA to produce the mature 5'-terminus. It can also cleave other RNA substrates such as 4.5S RNA. The protein component plays an auxiliary but essential role in vivo by binding to the 5'-leader sequence and broadening the substrate specificity of the ribozyme. The chain is Ribonuclease P protein component from Streptococcus thermophilus (strain ATCC BAA-491 / LMD-9).